Reading from the N-terminus, the 89-residue chain is Large ribosomal subunit protein bL31B (89 aa).

The protein belongs to the bacterial ribosomal protein bL31 family. Type B subfamily. Part of the 50S ribosomal subunit.

This Enterococcus faecalis (strain ATCC 700802 / V583) protein is Large ribosomal subunit protein bL31B.